The chain runs to 553 residues: Cytokine-like nuclear factor N-PAC (553 aa).

One can recognise a PWWP domain in the interval 8-66; sequence LGDLVWGKLGRYPPWPGKIVNPPKDLKKPRGKKCFFVKFFGTEDHAWIKVEQLKPYHAH. 2 stretches are compositionally biased toward basic and acidic residues: residues 92 to 145 and 162 to 182; these read RAKG…EGKK and RAQE…KDLS. The tract at residues 92–190 is disordered; the sequence is RAKGKDQTSS…LSIPESSTVK (99 aa). At S130 the chain carries Phosphoserine. Residue K135 forms a Glycyl lysine isopeptide (Lys-Gly) (interchain with G-Cter in SUMO2) linkage. Phosphoserine is present on S167. Positions 168–180 form a DNA-binding region, a.T hook; it reads PRKRGRPPKDEKD. Residues K176, K179, K201, and K211 each participate in a glycyl lysine isopeptide (Lys-Gly) (interchain with G-Cter in SUMO2) cross-link. Residues 214–217 form an interaction with histone H3 region; that stretch reads DPHF. The interval 216 to 225 is interaction with KDM1B; that stretch reads HFHHFLLSQT. Residues K227, K237, K240, and K269 each participate in a glycyl lysine isopeptide (Lys-Gly) (interchain with G-Cter in SUMO2) cross-link. Residues 261-553 form a dehydrogenase domain region; it reads GSVTPTDKKI…MSAVYRAYIH (293 aa). Residue 271–285 participates in NAD(+) binding; the sequence is GFLGLGLMGSGIVSN. Residue K302 forms a Glycyl lysine isopeptide (Lys-Gly) (interchain with G-Cter in SUMO2) linkage. Residues T362 and K505 each coordinate NAD(+). A Phosphoserine modification is found at S540.

This sequence belongs to the HIBADH-related family. NP60 subfamily. In terms of assembly, homotetramere. Interacts with MAPK14. Interacts with KDM1B at nucleosomes; this interaction stimulates H3K4me1 and H3K4me2 demethylation. Binds to mononucleosomes. Interacts with GATA4; the interaction is required for a synergistic activation of GATA4 target genes transcription.

The protein localises to the nucleus. It localises to the chromosome. Its function is as follows. Cytokine-like nuclear factor with chromatin gene reader activity involved in chromatin modification and regulation of gene expression. Acts as a nucleosome-destabilizing factor that is recruited to genes during transcriptional activation. Recognizes and binds histone H3 without a preference for specific epigenetic markers and also binds DNA. Interacts with KDM1B and promotes its histone demethylase activity by facilitating the capture of H3 tails, they form a multifunctional enzyme complex that modifies transcribed chromatin and facilitates Pol II transcription through nucleosomes. Stimulates the acetylation of 'Lys-56' of nucleosomal histone H3 (H3K56ac) by EP300. With GATA4, co-binds a defined set of heart development genes and coregulates their expression during cardiomyocyte differentiation. Regulates p38 MAP kinase activity by mediating stress activation of MAPK14/p38alpha and specifically regulating MAPK14 signaling. Indirectly promotes phosphorylation of MAPK14 and activation of ATF2. The phosphorylation of MAPK14 requires upstream activity of MAP2K4 and MAP2K6. This chain is Cytokine-like nuclear factor N-PAC (GLYR1), found in Bos taurus (Bovine).